A 396-amino-acid polypeptide reads, in one-letter code: Penicillopepsin-1 (396 aa).

Positions 1–20 (MVVFSKVTASLACFSAVVSA) are cleaved as a signal peptide. The propeptide at 21-72 (AAVPVKSPRQGFSVNQVQKTVTGTRTVNLPGVYANALAKYGATVPANVHAAA) is activation peptide. The region spanning 88–393 (YLTPVKIGES…DAEGPRLGFA (306 aa)) is the Peptidase A1 domain. Active-site residues include Asp104 and Asp285. Asn311 carries N-linked (GlcNAc...) asparagine glycosylation. Cys321 and Cys356 form a disulfide bridge.

Belongs to the peptidase A1 family. As to quaternary structure, monomer.

Its subcellular location is the secreted. The enzyme catalyses Hydrolysis of proteins with broad specificity similar to that of pepsin A, preferring hydrophobic residues at P1 and P1', but also cleaving 20-Gly-|-Glu-21 in the B chain of insulin. Clots milk, and activates trypsinogen.. Its function is as follows. Secreted aspartic endopeptidase that allows assimilation of proteinaceous substrates. The scissile peptide bond is attacked by a nucleophilic water molecule activated by two aspartic residues in the active site. Shows a broad primary substrate specificity. Favors hydrophobic residues at the P1 and P1' positions, but can also activate trypsinogen and hydrolyze the B chain of insulin between positions 'Gly-20' and 'Glu-21'. The protein is Penicillopepsin-1 (pepA) of Penicillium rubens (strain ATCC 28089 / DSM 1075 / NRRL 1951 / Wisconsin 54-1255) (Penicillium chrysogenum).